The sequence spans 388 residues: Probable RNA-binding protein sce3 (388 aa).

A disordered region spans residues 18–84; the sequence is ESFGSTNWAD…GGMGSGYQRD (67 aa). Over residues 38–50 the composition is skewed to polar residues; the sequence is DRTTSTYRATPSS. Phosphoserine is present on residues Ser49, Ser50, and Ser60. At Thr61 the chain carries Phosphothreonine. Ser64, Ser67, and Ser71 each carry phosphoserine. An RRM domain is found at 94 to 169; the sequence is FTAHVGNLSF…RPVRITVAEP (76 aa). Basic and acidic residues predominate over residues 171 to 185; sequence RSFAREERSTGDWVR. A disordered region spans residues 171–388; sequence RSFAREERST…WTKIGKGRKH (218 aa). The residue at position 197 (Ser197) is a Phosphoserine. The span at 208–229 shows a compositional bias: basic and acidic residues; that stretch reads RFRDPARDPSDRVREEPREWVR. Polar residues predominate over residues 248 to 257; sequence PRSSSNVNTE. Ser250, Ser251, and Ser252 each carry phosphoserine. Residues 258–268 are compositionally biased toward low complexity; that stretch reads ATPSATTTTSS. Basic and acidic residues predominate over residues 289-349; the sequence is RVEEKLAKRT…LGDGEKKSSE (61 aa). At Ser347 the chain carries Phosphoserine.

It is found in the cytoplasm. The chain is Probable RNA-binding protein sce3 (sce3) from Schizosaccharomyces pombe (strain 972 / ATCC 24843) (Fission yeast).